The chain runs to 117 residues: Glutamine-rich protein (117 aa).

Residues R27–G72 are compositionally biased toward low complexity. Residues R27–N88 are disordered. Residues R75–Q87 are compositionally biased toward polar residues.

As to expression, component of the acid-soluble and acid-insoluble organic matrix of calcified shell layers (at protein level).

The protein resides in the secreted. The protein is Glutamine-rich protein of Haliotis asinina (Donkey's ear abalone).